The following is a 436-amino-acid chain: 3-ketoacyl-CoA thiolase (436 aa).

The active-site Acyl-thioester intermediate is cysteine 99. Residues histidine 392 and cysteine 422 each act as proton acceptor in the active site.

Belongs to the thiolase-like superfamily. Thiolase family. Heterotetramer of two alpha chains (FadJ) and two beta chains (FadI).

It localises to the cytoplasm. It carries out the reaction an acyl-CoA + acetyl-CoA = a 3-oxoacyl-CoA + CoA. It functions in the pathway lipid metabolism; fatty acid beta-oxidation. Its function is as follows. Catalyzes the final step of fatty acid oxidation in which acetyl-CoA is released and the CoA ester of a fatty acid two carbons shorter is formed. This Cronobacter sakazakii (strain ATCC BAA-894) (Enterobacter sakazakii) protein is 3-ketoacyl-CoA thiolase.